Consider the following 285-residue polypeptide: MDKIKVGLQYWIPQHGLTRLVGKLASAEAGGLTTAVIRWFIKQYNVNMDEAKHSDPKHFKTFNEFFVRELKDGARPIAEGDAVITHPADACVSQFGPIEDGQLIQAKGHNFSAQELLGGDAKLAEEFQDGSFATLYLSPRDYHRVHMPCDGTLRQMIYVPGDLFSVNPLTAENVPNLFARNERVVCIFDTEFGPMAQVLVGATIVGSIEQVWAGTITPPRGNSVYKWDYPAEGDKAVILKKGEEMGRFKLGSTVINLFVKNAIAFDESMENGKPTVMGTPYAHQQ.

Residues Asp89, His146, and Ser252 each act as charge relay system; for autoendoproteolytic cleavage activity in the active site. The Schiff-base intermediate with substrate; via pyruvic acid; for decarboxylase activity role is filled by Ser252. Ser252 bears the Pyruvic acid (Ser); by autocatalysis mark.

Belongs to the phosphatidylserine decarboxylase family. PSD-B subfamily. Prokaryotic type I sub-subfamily. As to quaternary structure, heterodimer of a large membrane-associated beta subunit and a small pyruvoyl-containing alpha subunit. The cofactor is pyruvate. Is synthesized initially as an inactive proenzyme. Formation of the active enzyme involves a self-maturation process in which the active site pyruvoyl group is generated from an internal serine residue via an autocatalytic post-translational modification. Two non-identical subunits are generated from the proenzyme in this reaction, and the pyruvate is formed at the N-terminus of the alpha chain, which is derived from the carboxyl end of the proenzyme. The autoendoproteolytic cleavage occurs by a canonical serine protease mechanism, in which the side chain hydroxyl group of the serine supplies its oxygen atom to form the C-terminus of the beta chain, while the remainder of the serine residue undergoes an oxidative deamination to produce ammonia and the pyruvoyl prosthetic group on the alpha chain. During this reaction, the Ser that is part of the protease active site of the proenzyme becomes the pyruvoyl prosthetic group, which constitutes an essential element of the active site of the mature decarboxylase.

It localises to the cell membrane. It catalyses the reaction a 1,2-diacyl-sn-glycero-3-phospho-L-serine + H(+) = a 1,2-diacyl-sn-glycero-3-phosphoethanolamine + CO2. It participates in phospholipid metabolism; phosphatidylethanolamine biosynthesis; phosphatidylethanolamine from CDP-diacylglycerol: step 2/2. Its function is as follows. Catalyzes the formation of phosphatidylethanolamine (PtdEtn) from phosphatidylserine (PtdSer). This Vibrio campbellii (strain ATCC BAA-1116) protein is Phosphatidylserine decarboxylase proenzyme.